Consider the following 137-residue polypeptide: Large ribosomal subunit protein uL16 (137 aa).

It belongs to the universal ribosomal protein uL16 family. As to quaternary structure, part of the 50S ribosomal subunit.

Functionally, binds 23S rRNA and is also seen to make contacts with the A and possibly P site tRNAs. The chain is Large ribosomal subunit protein uL16 from Hydrogenovibrio crunogenus (strain DSM 25203 / XCL-2) (Thiomicrospira crunogena).